Reading from the N-terminus, the 238-residue chain is MRTLFVGDLHLSADRPDITQAFLEFLDTQLHDTDALYILGDLFEVWVGDDIAEPFVNQLVDAIKHASEKLPVYFIHGNRDFLIGEAFAKRCGMTLLPEVYSLDLYGVSTVILHGDSLCTLDKSYQRFRAFRNQGWAKWLYAHLPKSKRLGIAAKLRAKSQSSNQQKSYTIMDVEPDAVMDLLDATQTQQMIHGHTHRPDIHQLAHGKRRIVVGDWYEQGSMLSVSQDGVELIELPFGK.

Residues D8, H10, D41, N78, and H113 each coordinate Mn(2+). 78–79 (NR) serves as a coordination point for substrate. D121, S159, N163, K166, and H194 together coordinate substrate. Residues H194 and H196 each contribute to the Mn(2+) site.

The protein belongs to the LpxH family. The cofactor is Mn(2+).

It is found in the cell inner membrane. It catalyses the reaction UDP-2-N,3-O-bis[(3R)-3-hydroxytetradecanoyl]-alpha-D-glucosamine + H2O = 2-N,3-O-bis[(3R)-3-hydroxytetradecanoyl]-alpha-D-glucosaminyl 1-phosphate + UMP + 2 H(+). It functions in the pathway glycolipid biosynthesis; lipid IV(A) biosynthesis; lipid IV(A) from (3R)-3-hydroxytetradecanoyl-[acyl-carrier-protein] and UDP-N-acetyl-alpha-D-glucosamine: step 4/6. Hydrolyzes the pyrophosphate bond of UDP-2,3-diacylglucosamine to yield 2,3-diacylglucosamine 1-phosphate (lipid X) and UMP by catalyzing the attack of water at the alpha-P atom. Involved in the biosynthesis of lipid A, a phosphorylated glycolipid that anchors the lipopolysaccharide to the outer membrane of the cell. The protein is UDP-2,3-diacylglucosamine hydrolase of Shewanella pealeana (strain ATCC 700345 / ANG-SQ1).